Consider the following 308-residue polypeptide: Glutaminase (308 aa).

Positions 66, 117, 162, 169, 193, 244, and 262 each coordinate substrate.

Belongs to the glutaminase family. As to quaternary structure, homotetramer.

The enzyme catalyses L-glutamine + H2O = L-glutamate + NH4(+). This Natranaerobius thermophilus (strain ATCC BAA-1301 / DSM 18059 / JW/NM-WN-LF) protein is Glutaminase.